Reading from the N-terminus, the 605-residue chain is Terpenoid synthase 18 (605 aa).

Mg(2+) contacts are provided by Asp-356, Asp-360, Asn-500, Thr-504, and Glu-508. The short motif at 356–360 is the DDXXD motif element; that stretch reads DDTYD.

It belongs to the terpene synthase family. Tpsa subfamily. It depends on Mg(2+) as a cofactor. Mn(2+) is required as a cofactor. As to expression, predominantly expressed in flowers and siliques but also in roots and leaves.

It localises to the cytoplasm. It participates in secondary metabolite biosynthesis; terpenoid biosynthesis. This Arabidopsis thaliana (Mouse-ear cress) protein is Terpenoid synthase 18 (TPS18).